The following is a 216-amino-acid chain: Thiopurine S-methyltransferase (216 aa).

Positions 10, 45, 66, and 123 each coordinate S-adenosyl-L-methionine.

Belongs to the class I-like SAM-binding methyltransferase superfamily. TPMT family.

It localises to the cytoplasm. The catalysed reaction is S-adenosyl-L-methionine + a thiopurine = S-adenosyl-L-homocysteine + a thiopurine S-methylether.. This chain is Thiopurine S-methyltransferase, found in Pseudomonas entomophila (strain L48).